The chain runs to 461 residues: Probable tubulin polyglutamylase TTLL9 (461 aa).

A disordered region spans residues 1-21; it reads MSRPKNQNYKGHGLQKGKERE. The TTL domain occupies 22–402; the sequence is QRASIRFKTT…EARLTGREKR (381 aa). Residues K149 and 155–156 contribute to the ATP site; that span reads QG. Q155 provides a ligand contact to a protein. Positions 182-208 are disordered; sequence SLEAQPARNTVNPSGSHDTRSSDDQKD. Over residues 188 to 197 the composition is skewed to polar residues; sequence ARNTVNPSGS. The span at 198 to 208 shows a compositional bias: basic and acidic residues; sequence HDTRSSDDQKD. ATP is bound by residues 218 to 221 and 231 to 233; these read QRYI and KFD. R257 provides a ligand contact to L-glutamate. Residue 276 to 277 participates in ATP binding; that stretch reads TN. K294 contributes to the L-glutamate binding site. Mg(2+) contacts are provided by D348, E361, and N363. Position 379 (K379) interacts with L-glutamate.

This sequence belongs to the tubulin--tyrosine ligase family. The cofactor is Mg(2+).

Its subcellular location is the cytoplasm. The protein resides in the cytoskeleton. It is found in the cilium basal body. The protein localises to the flagellum axoneme. It carries out the reaction (L-glutamyl)(n)-gamma-L-glutamyl-L-glutamyl-[protein] + L-glutamate + ATP = (L-glutamyl)(n+1)-gamma-L-glutamyl-L-glutamyl-[protein] + ADP + phosphate + H(+). Functionally, probable tubulin polyglutamylase that generates side chains of glutamate on the gamma-carboxyl group of specific glutamate residues within the C-terminal tail of target proteins. Similar to TTLL1, may acquire enzymatic activity only in complex with other proteins as it is most likely lacking domains important for autonomous activity. Mediates tubulin polyglutamylation which induces establishment of microtubule heterogeneity in sperm flagella, thereby playing a role in normal motile flagella axoneme structure and sperm flagella beating pattern. The protein is Probable tubulin polyglutamylase TTLL9 (TTLL9) of Bos taurus (Bovine).